The chain runs to 186 residues: ADP-ribosylation factor-like protein 8B (186 aa).

Residues 1–19 (MLALISRLLDWFRSLFWKE) constitute an intramembrane region (note=Mediates targeting to membranes). Residues 29–35 (QYSGKTT), 71–75 (DIGGQ), and 130–133 (NKRD) each bind GTP. Lysine 141 is covalently cross-linked (Glycyl lysine isopeptide (Lys-Gly) (interchain with G-Cter in ubiquitin)).

It belongs to the small GTPase superfamily. Arf family. Interacts with tubulin. Interacts with BORCS5; recruits ARL8B to lysosomes. Interacts with VPS41; the interaction mediates the recruitment of the HOPS complex to lysosomes. Interacts (GTP-bound form) with PLEKHM2 (via RUN domain); the interaction is required to recruit the motor protein kinesin-1 on lysosomes. Interacts (GTP-bound form) with PLEKHM1 (via RUN domain); the interaction is required for PLEKHM1 localization to lysosomes and for ARL8B function in delivery and degradation of endocytic and autophagic cargo in lysosomes. PLEKHM1 and PLEKHM2 compete for interaction with ARL8B. Interacts (GTP-bound form) with RUFY1; the interaction is required for RUFY1 endosomal location. When GTP-bound, interacts with RUFY3 and RUFY4, but not with RUFY1, nor RUFY2. In terms of processing, ubiquitinated at Lys-141 by RNF167, leading to its degradation.

The protein resides in the late endosome membrane. It is found in the lysosome membrane. The protein localises to the cytoplasm. It localises to the cytoskeleton. Its subcellular location is the spindle. The protein resides in the cell projection. It is found in the axon. The protein localises to the synapse. It localises to the cytolytic granule membrane. Its subcellular location is the early endosome membrane. The catalysed reaction is GTP + H2O = GDP + phosphate + H(+). Functionally, small GTPase which cycles between active GTP-bound and inactive GDP-bound states. In its active state, binds to a variety of effector proteins playing a key role in the regulation of lysosomal positioning which is important for nutrient sensing, natural killer cell-mediated cytotoxicity and antigen presentation. Along with its effectors, orchestrates lysosomal transport and fusion. Localizes specifically to lysosomal membranes and mediates anterograde lysosomal motility by recruiting PLEKHM2, which in turn recruits the motor protein kinesin-1 on lysosomes. Required for lysosomal and cytolytic granule exocytosis. Critical factor involved in NK cell-mediated cytotoxicity. Drives the polarization of cytolytic granules and microtubule-organizing centers (MTOCs) toward the immune synapse between effector NK lymphocytes and target cells. In neurons, mediates the anterograde axonal long-range transport of presynaptic lysosome-related vesicles required for presynaptic biogenesis and synaptic function. Also acts as a regulator of endosome to lysosome trafficking pathways of special significance for host defense. Recruits RUFY1 onto early endosomes regulating endosomes to trans-Golgi network proteins retrieval. Regulates cargo trafficking to lysosomes by binding to PLEKHM1 and recruiting the HOPS subunit VPS41, resulting in functional assembly of the HOPS complex on lysosomal membranes. Plays an important role in cargo delivery to lysosomes for antigen presentation and microbial killing. Directs the intersection of CD1d with lipid antigens in lysosomes, and plays a role in intersecting phagosomes with lysosomes to generate phagolysosomes that kill microbes. Involved in the process of MHC II presentation. Regulates the delivery of antigens to lysosomes and the formation of MHC II-peptide complexes through the recruitment of the HOPS complex to lysosomes allowing the fusion of late endosomes to lysosomes. May play a role in chromosome segregation. This Bos taurus (Bovine) protein is ADP-ribosylation factor-like protein 8B (ARL8B).